The chain runs to 678 residues: Platelet endothelial cell adhesion molecule (678 aa).

Positions 1–17 (MLLALLLTMLLYASLQA) are cleaved as a signal peptide. Residues 18–589 (QENSFTINSI…VRVFLAPWKK (572 aa)) are Extracellular-facing. Ig-like C2-type domains lie at 40 to 126 (GQKL…PEVT), 135 to 213 (GGIV…FIRS), 225 to 309 (PKFQ…ILVN), 315 to 391 (PRPK…LVPV), 413 to 472 (GQII…NCHS), and 488 to 577 (PVDE…RSGP). Cysteines 47 and 99 form a disulfide. N-linked (GlcNAc...) asparagine glycosylation is found at Asn74 and Asn141. 2 cysteine pairs are disulfide-bonded: Cys142-Cys195 and Cys245-Cys293. Residues Asn309, Asn345, Asn360, Asn424, and Asn540 are each glycosylated (N-linked (GlcNAc...) asparagine). 3 disulfides stabilise this stretch: Cys336-Cys375, Cys420-Cys465, and Cys512-Cys561. Residues 590–610 (GLIAVVVIGVVIAALIVAAKY) traverse the membrane as a helical segment. Residues 611–678 (YFLRKAKAKQ…EPHQENGRLP (68 aa)) are Cytoplasmic-facing. The disordered stretch occupies residues 634 to 653 (NSNSEKVSEPSVETNSHYDS). The short motif at 658 to 663 (VEYTEV) is the ITIM motif element. Position 660 is a phosphotyrosine; by FER (Tyr660).

Trans-homodimer (via Ig-like C2-type 1 and Ig-like C2-type 2 domains); trans-homodimerization is required for cell-cell interaction. Forms a complex with BDKRB2 and GNAQ. Interacts with BDKRB2 and GNAQ. Interacts with PTPN11. Interacts with FER. Interacts with CD177; the interaction is Ca(2+)-dependent; the interaction is direct. In terms of processing, phosphorylated on Ser and Tyr residues after cellular activation. In endothelial cells Fyn mediates mechanical-force (stretch or pull) induced tyrosine phosphorylation. Phosphorylated on tyrosine residues by FER and FES in response to FCER1 activation. Post-translationally, palmitoylation by ZDHHC21 is necessary for cell surface expression in endothelial cells and enrichment in membrane rafts.

It is found in the cell membrane. Its subcellular location is the membrane raft. It localises to the cell junction. Functionally, cell adhesion molecule which is required for leukocyte transendothelial migration (TEM) under most inflammatory conditions. Tyr-660 plays a critical role in TEM and is required for efficient trafficking of PECAM1 to and from the lateral border recycling compartment (LBRC) and is also essential for the LBRC membrane to be targeted around migrating leukocytes. Trans-homophilic interaction may play a role in endothelial cell-cell adhesion via cell junctions. Heterophilic interaction with CD177 plays a role in transendothelial migration of neutrophils. Homophilic ligation of PECAM1 prevents macrophage-mediated phagocytosis of neighboring viable leukocytes by transmitting a detachment signal. Promotes macrophage-mediated phagocytosis of apoptotic leukocytes by tethering them to the phagocytic cells; PECAM1-mediated detachment signal appears to be disabled in apoptotic leukocytes. Modulates bradykinin receptor BDKRB2 activation. Regulates bradykinin- and hyperosmotic shock-induced ERK1/2 activation in endothelial cells. Induces susceptibility to atherosclerosis. This Rattus norvegicus (Rat) protein is Platelet endothelial cell adhesion molecule (Pecam1).